The sequence spans 53 residues: Putative defensin-like protein 53 (53 aa).

Cystine bridges form between cysteine 12–cysteine 51, cysteine 16–cysteine 40, cysteine 26–cysteine 49, and cysteine 30–cysteine 50.

This sequence belongs to the DEFL family.

The chain is Putative defensin-like protein 53 from Arabidopsis thaliana (Mouse-ear cress).